Reading from the N-terminus, the 1435-residue chain is Neuropathy target esterase sws (1435 aa).

Over 1–35 the chain is Lumenal; the sequence is MDVLELLRVSGSNMYYSTFLADAWCYYISNQITMT. The chain crosses the membrane as a helical span at residues 36 to 56; the sequence is MYLYCALGVLSMLFIGWFVYF. Residues 57–1435 are Cytoplasmic-facing; the sequence is KRLARLRLRH…NTNNETKNYL (1379 aa). 176–303 contributes to the a nucleoside 3',5'-cyclic phosphate binding site; the sequence is IFGHFEKPIF…IRVIQVIMIR (128 aa). Residues 361–372 are compositionally biased toward low complexity; that stretch reads AASGTAGSTHTA. 2 disordered regions span residues 361-405 and 422-452; these read AASG…ELSG and NSYP…QPEV. Over residues 435–449 the composition is skewed to polar residues; the sequence is GNLSTRRGSITQQEQ. Phosphoserine is present on Ser-443. A nucleoside 3',5'-cyclic phosphate-binding positions include 474 to 601 and 590 to 717; these read ELGL…VVRR and IVLD…LSHR. Residues 944–1110 form the PNPLA domain; that stretch reads LVLGGGGARG…VNNLPGHLWR (167 aa). A GXGXXG motif is present at residues 948–953; the sequence is GGGARG. The short motif at 975 to 979 is the GXSXG element; that stretch reads GVSIG. Ser-977 serves as the catalytic Nucleophile. The Proton acceptor role is filled by Asp-1097. The DGA/G signature appears at 1097-1099; that stretch reads DGG. Residues 1308 to 1435 form a disordered region; it reads MDKATQSTPP…NTNNETKNYL (128 aa). Residues 1311 to 1322 are compositionally biased toward polar residues; sequence ATQSTPPLQSKA. 2 stretches are compositionally biased toward basic and acidic residues: residues 1330 to 1361 and 1393 to 1424; these read SKEE…RELS and MDKK…KENR. Positions 1425 to 1435 are enriched in polar residues; that stretch reads SNTNNETKNYL.

The protein belongs to the NTE family. As to quaternary structure, interacts with Pka-C3; interaction inhibits the catalytic function of Pka-C3 and the esterase activity of sws.

The protein resides in the endoplasmic reticulum membrane. It carries out the reaction a 1-acyl-sn-glycero-3-phosphocholine + H2O = sn-glycerol 3-phosphocholine + a fatty acid + H(+). Phospholipase B that deacylates intracellular phosphatidylcholine (PtdCho), generating glycerophosphocholine (GroPtdCho). This deacylation occurs at both sn-2 and sn-1 positions of PtdCho. Its specific chemical modification by certain organophosphorus (OP) compounds leads to distal axonopathy. Plays a role in the signaling mechanism between neurons and glia that regulates glia wrapping during development of the adult brain. Essential for membrane lipid homeostasis and cell survival in both neurons and glia of the adult brain. This Drosophila persimilis (Fruit fly) protein is Neuropathy target esterase sws.